Consider the following 406-residue polypeptide: MRRGGPSVLGIVLAGGEGKRLMPLTADRAKPAVTFGGTYRLVDFVLSNLVNADILRICVLTQYKSHSLDRHITTTWRMSSLLGNYITPVPAQQRLGPRWYLGSADAILQSLNLVYDERPEYIAVFGADHVYRMDPRQMLGEHIESGAGVTVAGIRVPRAESSSFGVIAPGSDGQTVENFLEKPADPPGLPGDPECVFASMGNYVFTTKVLIEALQRDAEDGDSVHDMGGSILPALTDRGEARLYDFSANHVPGETTRDQGYWRDVGTLDAYYDAHMDLIAERPAFNLFNRSWPIYTHSGQLSPARFNAGGIASESIISAGCLIRGQVTRSVLSPGVVVDPGAVVQGSVLHDNVHVGRGAVVRGAVLDKNVEVPPGATIGVNPGRDADLYTVSKGGVIGLGKGQRVS.

Residues Y100, G165, 181–182, and S199 contribute to the alpha-D-glucose 1-phosphate site; that span reads EK.

Belongs to the bacterial/plant glucose-1-phosphate adenylyltransferase family. As to quaternary structure, homotetramer.

It catalyses the reaction alpha-D-glucose 1-phosphate + ATP + H(+) = ADP-alpha-D-glucose + diphosphate. It functions in the pathway glycan biosynthesis; glycogen biosynthesis. In terms of biological role, involved in the biosynthesis of ADP-glucose, a building block required for the elongation reactions to produce glycogen. Catalyzes the reaction between ATP and alpha-D-glucose 1-phosphate (G1P) to produce pyrophosphate and ADP-Glc. The polypeptide is Glucose-1-phosphate adenylyltransferase (Streptomyces avermitilis (strain ATCC 31267 / DSM 46492 / JCM 5070 / NBRC 14893 / NCIMB 12804 / NRRL 8165 / MA-4680)).